We begin with the raw amino-acid sequence, 83 residues long: Exodeoxyribonuclease 7 small subunit (83 aa).

The disordered stretch occupies residues 1-25; it reads MQDELFETEKAPPKNAKNAPKKSFE.

This sequence belongs to the XseB family. In terms of assembly, heterooligomer composed of large and small subunits.

It is found in the cytoplasm. It carries out the reaction Exonucleolytic cleavage in either 5'- to 3'- or 3'- to 5'-direction to yield nucleoside 5'-phosphates.. Functionally, bidirectionally degrades single-stranded DNA into large acid-insoluble oligonucleotides, which are then degraded further into small acid-soluble oligonucleotides. This Helicobacter pylori (strain P12) protein is Exodeoxyribonuclease 7 small subunit.